We begin with the raw amino-acid sequence, 115 residues long: Ig heavy chain V-III region J606 (115 aa).

Positions E1–S114 constitute an Ig-like domain. The cysteines at positions 22 and 98 are disulfide-linked.

The polypeptide is Ig heavy chain V-III region J606 (Mus musculus (Mouse)).